The following is a 153-amino-acid chain: 6,7-dimethyl-8-ribityllumazine synthase 1 (153 aa).

Residues Phe-16, 50–52 (AYE), and 74–76 (CVI) contribute to the 5-amino-6-(D-ribitylamino)uracil site. 79–80 (ET) contacts (2S)-2-hydroxy-3-oxobutyl phosphate. The Proton donor role is filled by His-82. Phe-107 is a binding site for 5-amino-6-(D-ribitylamino)uracil. Arg-121 serves as a coordination point for (2S)-2-hydroxy-3-oxobutyl phosphate.

Belongs to the DMRL synthase family.

It carries out the reaction (2S)-2-hydroxy-3-oxobutyl phosphate + 5-amino-6-(D-ribitylamino)uracil = 6,7-dimethyl-8-(1-D-ribityl)lumazine + phosphate + 2 H2O + H(+). The protein operates within cofactor biosynthesis; riboflavin biosynthesis; riboflavin from 2-hydroxy-3-oxobutyl phosphate and 5-amino-6-(D-ribitylamino)uracil: step 1/2. Catalyzes the formation of 6,7-dimethyl-8-ribityllumazine by condensation of 5-amino-6-(D-ribitylamino)uracil with 3,4-dihydroxy-2-butanone 4-phosphate. This is the penultimate step in the biosynthesis of riboflavin. The protein is 6,7-dimethyl-8-ribityllumazine synthase 1 of Caulobacter vibrioides (strain ATCC 19089 / CIP 103742 / CB 15) (Caulobacter crescentus).